Here is a 476-residue protein sequence, read N- to C-terminus: UDP-glycosyltransferase 71C3 (476 aa).

UDP-alpha-D-glucose is bound by residues Ser290, 349 to 351 (APQ), 366 to 374 (HCGWNSVLE), and 388 to 391 (YAEQ).

This sequence belongs to the UDP-glycosyltransferase family.

Functionally, possesses low quercetin 3-O-glucosyltransferase activity in vitro. The chain is UDP-glycosyltransferase 71C3 (UGT71C3) from Arabidopsis thaliana (Mouse-ear cress).